The sequence spans 582 residues: ATP-dependent lipid A-core flippase (582 aa).

The next 5 helical transmembrane spans lie at 16–36 (LWPT…ALIL), 64–84 (LLWM…TSYI), 153–173 (IIGL…ILVV), 253–273 (PIIQ…ASFP), and 275–295 (VMDS…IALM). Residues 28–310 (IVAGIALILN…LTNVNAQFQR (283 aa)) form the ABC transmembrane type-1 domain. The 237-residue stretch at 342–578 (LEFRNVTFTY…HGVYAQLHKM (237 aa)) folds into the ABC transporter domain. 376–383 (GRSGSGKS) is an ATP binding site.

It belongs to the ABC transporter superfamily. Lipid exporter (TC 3.A.1.106) family. As to quaternary structure, homodimer.

It is found in the cell inner membrane. It carries out the reaction ATP + H2O + lipid A-core oligosaccharideSide 1 = ADP + phosphate + lipid A-core oligosaccharideSide 2.. Functionally, involved in lipopolysaccharide (LPS) biosynthesis. Translocates lipid A-core from the inner to the outer leaflet of the inner membrane. Transmembrane domains (TMD) form a pore in the inner membrane and the ATP-binding domain (NBD) is responsible for energy generation. In Salmonella paratyphi A (strain ATCC 9150 / SARB42), this protein is ATP-dependent lipid A-core flippase.